Reading from the N-terminus, the 528-residue chain is MNREHQREVDKRRTFGIISHPDAGKTTLTEKLLLFGGAIQMAGTVKSRKAARHATSDWMAMEQERGISVTTSVMKFHHNGYEINLLDTPGHQDFSEDTYRVLTAVDSALLVIDSAKGVEAQTLKLMDVCRMRSTPIVTFINKLDRDGLHPLEVMDDIESRLNIQCSPLTWPIGMGADFKGTWDIRTGRLHMFTPANDGRIASGRIIEGLDNPELDEALGEQAVTLRDELALLAEAGNPFDKERYLKGELTPVFFGSAINNFGVREMLDTFVDLAPAPQPRPATTRTVSPYEEDFSGVVFKIQANMDKNHRDRIAFMRICSGKFTRGMKVRHHRIGKEVALANATIFMAQDRTGVEEAWPGDIIGIHNHGTIKIGDTFSLREPLKFVGIPNFAPEHFRRVVLRDPMKAKQLQKGLEQLAEEGAVQLFRPLLGNDYILGAVGVLQFEVIVARLKDEYNVNALYEGCNITTARWLHTDDPKTMAEFRDYYRSELAMDAEGCLAYLAPNPWRLESAVERYPKMEFRTTREIS.

Residues 10-278 (DKRRTFGIIS…TFVDLAPAPQ (269 aa)) form the tr-type G domain. Residues 19–26 (SHPDAGKT), 87–91 (DTPGH), and 141–144 (NKLD) each bind GTP.

Belongs to the TRAFAC class translation factor GTPase superfamily. Classic translation factor GTPase family. PrfC subfamily.

Its subcellular location is the cytoplasm. In terms of biological role, increases the formation of ribosomal termination complexes and stimulates activities of RF-1 and RF-2. It binds guanine nucleotides and has strong preference for UGA stop codons. It may interact directly with the ribosome. The stimulation of RF-1 and RF-2 is significantly reduced by GTP and GDP, but not by GMP. This Oleidesulfovibrio alaskensis (strain ATCC BAA-1058 / DSM 17464 / G20) (Desulfovibrio alaskensis) protein is Peptide chain release factor 3.